Here is a 426-residue protein sequence, read N- to C-terminus: Histidine--tRNA ligase (426 aa).

It belongs to the class-II aminoacyl-tRNA synthetase family. In terms of assembly, homodimer.

It localises to the cytoplasm. The enzyme catalyses tRNA(His) + L-histidine + ATP = L-histidyl-tRNA(His) + AMP + diphosphate + H(+). This is Histidine--tRNA ligase from Shewanella baltica (strain OS223).